A 122-amino-acid chain; its full sequence is Basic phospholipase A2 F15 (122 aa).

Cystine bridges form between C26–C115, C28–C44, C43–C95, C49–C122, C50–C88, C57–C81, and C75–C86. Residues Y27, G29, and G31 each coordinate Ca(2+). H47 is a catalytic residue. Ca(2+) is bound at residue D48. D89 is a catalytic residue.

Belongs to the phospholipase A2 family. Group II subfamily. D49 sub-subfamily. When this protein is associated with crotapotin (F5 or F7), it forms the crotoxin protein. Ca(2+) serves as cofactor. As to expression, expressed by the venom gland.

The protein resides in the secreted. It catalyses the reaction a 1,2-diacyl-sn-glycero-3-phosphocholine + H2O = a 1-acyl-sn-glycero-3-phosphocholine + a fatty acid + H(+). Its activity is regulated as follows. Activated by heparin. Inhibited by its chaperone crotapotin. Functionally, snake venom phospholipase A2 (PLA2) that shows moderate neurotoxic activity in isolated mouse phrenic nerve diaphragm but shows high neurotoxic activity in a chick biventer cervis preparation. Also shows a high bactericidal effect against both Gram-negative and Gram-positive bacteria. PLA2 catalyzes the calcium-dependent hydrolysis of the 2-acyl groups in 3-sn-phosphoglycerides. The polypeptide is Basic phospholipase A2 F15 (Crotalus durissus terrificus (South American rattlesnake)).